Here is a 518-residue protein sequence, read N- to C-terminus: Tyrosine/DOPA decarboxylase 1 (518 aa).

Lys321 is modified (N6-(pyridoxal phosphate)lysine).

This sequence belongs to the group II decarboxylase family. As to quaternary structure, homodimer. Pyridoxal 5'-phosphate is required as a cofactor. As to expression, predominantly expressed in the roots.

The catalysed reaction is L-tyrosine + H(+) = tyramine + CO2. The enzyme catalyses L-dopa + H(+) = dopamine + CO2. It carries out the reaction 5-hydroxy-L-tryptophan + H(+) = serotonin + CO2. Marginally higher substrate specificity for L-DOPA over L-tyrosine. The sequence is that of Tyrosine/DOPA decarboxylase 1 (TYDC1) from Papaver somniferum (Opium poppy).